Reading from the N-terminus, the 409-residue chain is Lissencephaly-1 homolog (409 aa).

One can recognise a LisH domain in the interval Gln-7–Thr-39. The stretch at Thr-54 to Ala-81 forms a coiled coil. WD repeat units follow at residues Gly-104–Lys-145, Gly-146–Lys-185, Gly-189–Thr-228, Gly-231–Glu-270, Asp-273–Thr-332, Gly-335–Thr-374, and Ala-377–Arg-409.

Belongs to the WD repeat LIS1/nudF family.

The protein localises to the cytoplasm. It localises to the cytoskeleton. The protein resides in the microtubule organizing center. Its subcellular location is the centrosome. Positively regulates the activity of the minus-end directed microtubule motor protein dynein. May enhance dynein-mediated microtubule sliding by targeting dynein to the microtubule plus end. Required for several dynein- and microtubule-dependent processes. This chain is Lissencephaly-1 homolog, found in Drosophila willistoni (Fruit fly).